The sequence spans 146 residues: uncharacterized protein (146 aa).

This is an uncharacterized protein from Orgyia pseudotsugata (Douglas-fir tussock moth).